We begin with the raw amino-acid sequence, 120 residues long: Putative 15 kDa capsid protein (120 aa).

Its subcellular location is the virion. The protein is Putative 15 kDa capsid protein (P15) of Orgyia pseudotsugata (Douglas-fir tussock moth).